The following is a 125-amino-acid chain: Ly6/PLAUR domain-containing protein 2 (125 aa).

The first 22 residues, 1–22 (MRGTRLALLALVLAACGELAPA), serve as a signal peptide directing secretion. Residues 25–100 (CYVCPEPTGV…VSCCNTELCN (76 aa)) form the UPAR/Ly6 domain. Asparagine 46 carries an N-linked (GlcNAc...) asparagine glycan. Glycine 103 is lipidated: GPI-anchor amidated glycine. Positions 104 to 125 (APALNSLHCGALTLLPLLSLRL) are cleaved as a propeptide — removed in mature form.

The protein localises to the cell membrane. The chain is Ly6/PLAUR domain-containing protein 2 (LYPD2) from Homo sapiens (Human).